A 527-amino-acid chain; its full sequence is Zinc finger protein 35 (527 aa).

The segment at 9-221 (MALAPWGPVK…NPKTQLGQKP (213 aa)) is globular domain. Residues 16-38 (PVKVKKEEEEEENFPGQASSQQV) form a disordered region. Residues Lys20, Lys21, Lys99, Lys117, Lys125, Lys144, Lys158, Lys189, and Lys214 each participate in a glycyl lysine isopeptide (Lys-Gly) (interchain with G-Cter in SUMO2) cross-link. C2H2-type zinc fingers lie at residues 222–244 (FTCSVCGKGFSQSANLVVHQRIH) and 250–272 (FECHECGKAFIQSANLVVHQRIH). A Glycyl lysine isopeptide (Lys-Gly) (interchain with G-Cter in SUMO2) cross-link involves residue Lys276. 9 C2H2-type zinc fingers span residues 278 to 300 (YVCSKCGKAFTQSSNLTVHQKIH), 306 to 328 (FKCNECEKAFSYSSQLARHQKVH), 334 to 356 (YECNECGKTFTRSSNLIVHQRIH), 362 to 384 (FACNDCGKAFTQSANLIVHQRSH), 390 to 412 (YECKECGKAFSCFSHLIVHQRIH), 418 to 440 (YDCSECGKAFSQLSCLIVHQRIH), 446 to 468 (YVCNECGKAFTCSSYLLIHQRIH), 474 to 496 (YTCNECGKAFRQRSSLTVHQRTH), and 502 to 524 (YECEKCGAAFISNSHLMRHHRTH).

This sequence belongs to the krueppel C2H2-type zinc-finger protein family.

Its subcellular location is the nucleus. Functionally, may be involved in transcriptional regulation. Involved in cell differentiation and/or proliferation. In Homo sapiens (Human), this protein is Zinc finger protein 35 (ZNF35).